The sequence spans 651 residues: UvrABC system protein B (651 aa).

Positions 25-411 (RGISCGAKEQ…TGGVATEQLI (387 aa)) constitute a Helicase ATP-binding domain. ATP is bound at residue 38–45 (GVTGSGKT). A Beta-hairpin motif is present at residues 91–114 (YYDYYQPEAYIPQSDVYIEKDALI). A Helicase C-terminal domain is found at 427-591 (DGQIHDVMCE…IVPRTIQKPV (165 aa)). Residues 593 to 615 (TSLSERVGSSRKKVSRDTNTDPA) are disordered. The UVR domain occupies 616 to 651 (NRDIVELQKEMLLCAENLDFERAVEIRNEIKRLTAP).

This sequence belongs to the UvrB family. As to quaternary structure, forms a heterotetramer with UvrA during the search for lesions. Interacts with UvrC in an incision complex.

It localises to the cytoplasm. Functionally, the UvrABC repair system catalyzes the recognition and processing of DNA lesions. A damage recognition complex composed of 2 UvrA and 2 UvrB subunits scans DNA for abnormalities. Upon binding of the UvrA(2)B(2) complex to a putative damaged site, the DNA wraps around one UvrB monomer. DNA wrap is dependent on ATP binding by UvrB and probably causes local melting of the DNA helix, facilitating insertion of UvrB beta-hairpin between the DNA strands. Then UvrB probes one DNA strand for the presence of a lesion. If a lesion is found the UvrA subunits dissociate and the UvrB-DNA preincision complex is formed. This complex is subsequently bound by UvrC and the second UvrB is released. If no lesion is found, the DNA wraps around the other UvrB subunit that will check the other stand for damage. This chain is UvrABC system protein B, found in Anaplasma marginale (strain St. Maries).